The sequence spans 568 residues: Probable WRKY transcription factor 34 (568 aa).

A DNA-binding region (WRKY 1) is located at residues 172-236 (ACCAPADDGY…YTGDHIHSKP (65 aa)). 4 residues coordinate Zn(2+): cysteine 203, cysteine 208, histidine 231, and histidine 233. Disordered regions lie at residues 230-252 (DHIHSKPPPNRRSGIGSSGTGQD) and 337-360 (KRRKLEAYATETSGSTRASREPRV). Positions 366–431 (SDIDILDDGY…YIGKHTHVVP (66 aa)) form a DNA-binding region, WRKY 2. Zn(2+) contacts are provided by cysteine 397, cysteine 402, histidine 426, and histidine 428.

It belongs to the WRKY group I family.

The protein resides in the nucleus. Its function is as follows. Transcription factor. Interacts specifically with the W box (5'-(T)TGAC[CT]-3'), a frequently occurring elicitor-responsive cis-acting element. The protein is Probable WRKY transcription factor 34 (WRKY34) of Arabidopsis thaliana (Mouse-ear cress).